We begin with the raw amino-acid sequence, 505 residues long: Protein amnionless (505 aa).

A signal peptide spans 1 to 20; that stretch reads MGLHWQWLIWALVGLHVALA. Residues 21–344 lie on the Extracellular side of the membrane; sequence TKWYGGGMDF…RPYNPNVSFS (324 aa). A helical transmembrane segment spans residues 345–365; sequence SIVLILFCMALVGLVSVVILA. The Cytoplasmic segment spans residues 366–505; that stretch reads HFMPENPYLN…CEADTDEETI (140 aa). Positions 451 to 482 are disordered; it reads GALEEAAKESQEQDEILSVPKMETGDLDARSV. The segment covering 473-482 has biased composition (basic and acidic residues); sequence ETGDLDARSV.

Specifically expressed in nephrocytes.

It is found in the cell membrane. In terms of biological role, required in the nephrocyte for normal uptake of proteins and elimination of toxins, and for maintenance of endocytic trafficking structures. May function together with Cubn. This chain is Protein amnionless, found in Drosophila melanogaster (Fruit fly).